Reading from the N-terminus, the 184-residue chain is Lipocalin-15 (184 aa).

Positions 1 to 20 are cleaved as a signal peptide; the sequence is MMSFLLGAILTLLWAPTAQA. The cysteines at positions 83 and 176 are disulfide-linked.

The protein belongs to the calycin superfamily. Lipocalin family.

It localises to the secreted. The chain is Lipocalin-15 (LCN15) from Homo sapiens (Human).